The primary structure comprises 556 residues: 2-succinyl-5-enolpyruvyl-6-hydroxy-3-cyclohexene-1-carboxylate synthase (556 aa).

It belongs to the TPP enzyme family. MenD subfamily. In terms of assembly, homodimer. Mg(2+) is required as a cofactor. Mn(2+) serves as cofactor. Requires thiamine diphosphate as cofactor.

It carries out the reaction isochorismate + 2-oxoglutarate + H(+) = 5-enolpyruvoyl-6-hydroxy-2-succinyl-cyclohex-3-ene-1-carboxylate + CO2. It functions in the pathway quinol/quinone metabolism; 1,4-dihydroxy-2-naphthoate biosynthesis; 1,4-dihydroxy-2-naphthoate from chorismate: step 2/7. The protein operates within quinol/quinone metabolism; menaquinone biosynthesis. Functionally, catalyzes the thiamine diphosphate-dependent decarboxylation of 2-oxoglutarate and the subsequent addition of the resulting succinic semialdehyde-thiamine pyrophosphate anion to isochorismate to yield 2-succinyl-5-enolpyruvyl-6-hydroxy-3-cyclohexene-1-carboxylate (SEPHCHC). In Escherichia coli O127:H6 (strain E2348/69 / EPEC), this protein is 2-succinyl-5-enolpyruvyl-6-hydroxy-3-cyclohexene-1-carboxylate synthase.